Reading from the N-terminus, the 350-residue chain is DNA-directed RNA polymerase subunit alpha (350 aa).

An alpha N-terminal domain (alpha-NTD) region spans residues 1 to 226; it reads MLISQRPTLS…ELFGLARELN (226 aa). The alpha C-terminal domain (alpha-CTD) stretch occupies residues 241–350; that stretch reads ADQAAHFALP…NQDYAETEQL (110 aa). The interval 328–350 is disordered; it reads GTWNSDAGYDLEDNQDYAETEQL. Acidic residues predominate over residues 336 to 350; the sequence is YDLEDNQDYAETEQL.

Belongs to the RNA polymerase alpha chain family. In terms of assembly, homodimer. The RNAP catalytic core consists of 2 alpha, 1 beta, 1 beta' and 1 omega subunit. When a sigma factor is associated with the core the holoenzyme is formed, which can initiate transcription.

It carries out the reaction RNA(n) + a ribonucleoside 5'-triphosphate = RNA(n+1) + diphosphate. Its function is as follows. DNA-dependent RNA polymerase catalyzes the transcription of DNA into RNA using the four ribonucleoside triphosphates as substrates. This is DNA-directed RNA polymerase subunit alpha from Mycolicibacterium vanbaalenii (strain DSM 7251 / JCM 13017 / BCRC 16820 / KCTC 9966 / NRRL B-24157 / PYR-1) (Mycobacterium vanbaalenii).